The primary structure comprises 345 residues: Protein RecA (345 aa).

65–72 (GPESSGKT) is a binding site for ATP.

Belongs to the RecA family.

The protein resides in the cytoplasm. Functionally, can catalyze the hydrolysis of ATP in the presence of single-stranded DNA, the ATP-dependent uptake of single-stranded DNA by duplex DNA, and the ATP-dependent hybridization of homologous single-stranded DNAs. It interacts with LexA causing its activation and leading to its autocatalytic cleavage. This Sulfurimonas denitrificans (strain ATCC 33889 / DSM 1251) (Thiomicrospira denitrificans (strain ATCC 33889 / DSM 1251)) protein is Protein RecA.